The primary structure comprises 80 residues: Probable Rubredoxin-1 (80 aa).

Residues 19 to 72 form the Rubredoxin-like domain; it reads YRKYKCKVCGWVYDPLKGDPSQNIPPKTPFEELPDTWICPVCRGKVGKESFEPL. Fe cation-binding residues include Cys24, Cys27, Cys57, and Cys60.

Belongs to the rubredoxin family. The cofactor is Fe(3+).

Its function is as follows. Rubredoxin is a small nonheme, iron protein lacking acid-labile sulfide. Its single Fe, chelated to 4 Cys, functions as an electron acceptor and may also stabilize the conformation of the molecule. The chain is Probable Rubredoxin-1 from Methanocaldococcus jannaschii (strain ATCC 43067 / DSM 2661 / JAL-1 / JCM 10045 / NBRC 100440) (Methanococcus jannaschii).